We begin with the raw amino-acid sequence, 497 residues long: Di-/tripeptide transporter (497 aa).

12 helical membrane-spanning segments follow: residues 3–23 (AILL…MSQT), 26–46 (ASIM…GGWL), 57–77 (VFYG…PAGV), 84–104 (IALI…MVGG), 119–139 (IFVF…PWAA), 155–175 (AGFS…VLGG), 199–219 (IKWV…MAGV), 227–247 (VITL…VMMF), 294–314 (FIIL…KVII), 321–341 (LVLL…TFVL), 372–392 (GIEI…LIIL), and 452–472 (IVII…WSYI).

It belongs to the major facilitator superfamily. Proton-dependent oligopeptide transporter (POT/PTR) (TC 2.A.17) family.

The protein localises to the cell membrane. Proton-dependent uptake of di- or tri-peptides. This chain is Di-/tripeptide transporter (dtpT), found in Lactobacillus helveticus (Lactobacillus suntoryeus).